The following is a 311-amino-acid chain: Bifunctional protein FolD (311 aa).

174–176 (GKG) serves as a coordination point for NADP(+).

This sequence belongs to the tetrahydrofolate dehydrogenase/cyclohydrolase family. Homodimer.

The catalysed reaction is (6R)-5,10-methylene-5,6,7,8-tetrahydrofolate + NADP(+) = (6R)-5,10-methenyltetrahydrofolate + NADPH. It carries out the reaction (6R)-5,10-methenyltetrahydrofolate + H2O = (6R)-10-formyltetrahydrofolate + H(+). It participates in one-carbon metabolism; tetrahydrofolate interconversion. In terms of biological role, catalyzes the oxidation of 5,10-methylenetetrahydrofolate to 5,10-methenyltetrahydrofolate and then the hydrolysis of 5,10-methenyltetrahydrofolate to 10-formyltetrahydrofolate. The polypeptide is Bifunctional protein FolD (Pyrobaculum islandicum (strain DSM 4184 / JCM 9189 / GEO3)).